A 674-amino-acid chain; its full sequence is Probable protein phosphatase 2C 66 (674 aa).

The residue at position 125 (Ser-125) is a Phosphoserine. Disordered regions lie at residues 153 to 175 and 202 to 247; these read YSGP…RKKP and KSVI…KQSM. The PPM-type phosphatase domain occupies 244–665; it reads KQSMNSVLDV…DDVSVIVISL (422 aa). Residues Asp-282 and Gly-283 each coordinate Mn(2+). A compositionally biased stretch (basic and acidic residues) spans 373–384; the sequence is NNKTKSDNRCDQ. Positions 373–392 are disordered; it reads NNKTKSDNRCDQKGSNSTTT. Mn(2+) contacts are provided by Asp-593 and Asp-656.

The protein belongs to the PP2C family. Mg(2+) serves as cofactor. Requires Mn(2+) as cofactor. In terms of tissue distribution, expressed at low level in seedlings, roots, leaves, stems, young inflorescences, flowers and siliques.

The protein resides in the nucleus. It catalyses the reaction O-phospho-L-seryl-[protein] + H2O = L-seryl-[protein] + phosphate. The enzyme catalyses O-phospho-L-threonyl-[protein] + H2O = L-threonyl-[protein] + phosphate. This chain is Probable protein phosphatase 2C 66 (PLL2), found in Arabidopsis thaliana (Mouse-ear cress).